Consider the following 610-residue polypeptide: tRNA uridine 5-carboxymethylaminomethyl modification enzyme MnmG (610 aa).

14–19 (GAGHAG) contacts FAD. 274–288 (GPRYCPSIEDKIVKF) serves as a coordination point for NAD(+).

Belongs to the MnmG family. In terms of assembly, homodimer. Heterotetramer of two MnmE and two MnmG subunits. The cofactor is FAD.

It is found in the cytoplasm. Functionally, NAD-binding protein involved in the addition of a carboxymethylaminomethyl (cmnm) group at the wobble position (U34) of certain tRNAs, forming tRNA-cmnm(5)s(2)U34. The polypeptide is tRNA uridine 5-carboxymethylaminomethyl modification enzyme MnmG (Chlamydia trachomatis serovar D (strain ATCC VR-885 / DSM 19411 / UW-3/Cx)).